Here is a 343-residue protein sequence, read N- to C-terminus: Probable xyloglucan endotransglucosylase/hydrolase protein 30 (343 aa).

An N-terminal signal peptide occupies residues 1-23; the sequence is MSKSSYNHIFILILCLCLRSSSA. Residues 24-224 form the GH16 domain; that stretch reads FTNLNTLSFE…YKFAPFVAEF (201 aa). The active-site Nucleophile is Glu-109. The active-site Proton donor is Glu-113. Xyloglucan-binding positions include Glu-113 and 126-128; that span reads QTN. Asn-132 carries an N-linked (GlcNAc...) asparagine glycan. Xyloglucan is bound by residues 136–140, 203–204, Gly-208, and Arg-285; these read HRGRE and DW. Cys-280 and Cys-293 are disulfide-bonded. Positions 306-343 are disordered; it reads TGRLKFGGTEARERRRNRRQQRRPEIEIESDPDDRKLL.

Belongs to the glycosyl hydrolase 16 family. XTH group 3 subfamily. In terms of processing, contains at least one intrachain disulfide bond essential for its enzymatic activity. Predominantly expressed in green siliques.

Its subcellular location is the secreted. It is found in the cell wall. It localises to the extracellular space. The protein localises to the apoplast. It carries out the reaction breaks a beta-(1-&gt;4) bond in the backbone of a xyloglucan and transfers the xyloglucanyl segment on to O-4 of the non-reducing terminal glucose residue of an acceptor, which can be a xyloglucan or an oligosaccharide of xyloglucan.. Its function is as follows. Catalyzes xyloglucan endohydrolysis (XEH) and/or endotransglycosylation (XET). Cleaves and religates xyloglucan polymers, an essential constituent of the primary cell wall, and thereby participates in cell wall construction of growing tissues. This is Probable xyloglucan endotransglucosylase/hydrolase protein 30 (XTH30) from Arabidopsis thaliana (Mouse-ear cress).